Here is a 183-residue protein sequence, read N- to C-terminus: Transcription termination/antitermination protein NusG (183 aa).

A KOW domain is found at 131-161; it reads PGEEVRVTEGPFADFNGTVEEVDYEKGRLKV.

Belongs to the NusG family.

In terms of biological role, participates in transcription elongation, termination and antitermination. This Pasteurella multocida (strain Pm70) protein is Transcription termination/antitermination protein NusG.